The primary structure comprises 2381 residues: Myb-like protein U (2381 aa).

4 disordered regions span residues 1-85 (MKTK…TSNN), 148-167 (SSSGTVNNSNNNNNNDGGIS), 178-492 (PTIP…NNNN), and 641-696 (NINN…GDEM). Composition is skewed to low complexity over residues 30–41 (SKSSSKVSQSSS) and 64–79 (TIPAPLSTTITPPTLT). 3 stretches are compositionally biased toward low complexity: residues 192 to 204 (NLSSSTSSTNILS), 225 to 261 (ENVNNINSGNVKNSKNNSGSSISSSISSSSSSGSSSS), and 291 to 315 (SNKSNSKKSSSNKSKSPSNKNNNKK). The span at 331-343 (SEYDSSDSSDMDL) shows a compositional bias: acidic residues. A compositionally biased stretch (low complexity) spans 363–405 (TTKPNNSNSNNNNNNNSINSTIPASNNINSANNSKTTNKNITS). A compositionally biased stretch (polar residues) spans 421-430 (SETPILTSVK). 2 stretches are compositionally biased toward low complexity: residues 435–492 (QQIP…NNNN) and 641–692 (NINN…NNNN). Residues 856-899 (WHEEEKLLFRELFCAYGRDWQMVSTLMCGTKSPTQIKNFYYDVR) form the Myb-like domain. Disordered stretches follow at residues 932 to 1024 (KPEQ…ETPP), 1068 to 1093 (INQSSNSSPVNNNNSNNNNNNNNINP), 1145 to 1207 (TSST…SNQE), 1295 to 1339 (STTT…PPID), 1422 to 1474 (PYYP…LSTP), 1597 to 1647 (PPAT…TTIV), 1667 to 1849 (PIVK…PPPV), 1961 to 1985 (TTVPGTTTTTNPNGSIPPKPSNGLA), 2055 to 2106 (TSTV…NGLT), and 2122 to 2280 (LSGI…NKND). Positions 936–953 (NVNSNNNNNGGGNSLKDG) are enriched in low complexity. Basic residues predominate over residues 982-995 (VKKKSRTASKRSFR). The segment covering 1000-1013 (ANETNRTPKNQPKP) has biased composition (polar residues). Low complexity-rich tracts occupy residues 1069 to 1092 (NQSSNSSPVNNNNSNNNNNNNNIN), 1145 to 1186 (TSST…TGSA), 1195 to 1205 (VNNNNNNNLSN), and 1306 to 1325 (TTTPTQQQFQQLQPTQQLQQ). The segment covering 1326-1337 (LPPPPPPPPKPP) has biased composition (pro residues). The span at 1427–1474 (PSSTTTNSATSTPTSTPTSTPSTSASTLTPTSTPTSTPVPAPTSLSTP) shows a compositional bias: low complexity. Over residues 1597–1606 (PPATITPILP) the composition is skewed to pro residues. Positions 1618–1637 (SSSSSSSSSSSSSSSSSSSS) are enriched in low complexity. Composition is skewed to polar residues over residues 1638 to 1647 (TTKNNSTTIV) and 1671 to 1701 (QESNSPSKTLPPSNSPSKTLPLSNSPSKTLL). Composition is skewed to low complexity over residues 1702-1735 (PSNSSIPNKSTPSPIPKPTTSSTTYPVTTSNPSS) and 1743-1809 (TSNK…TLKP). A compositionally biased stretch (polar residues) spans 1829–1844 (APTNSTNQNTIPNATT). 2 stretches are compositionally biased toward low complexity: residues 1961–1970 (TTVPGTTTTT) and 2065–2097 (NNMTTTTTSSTSTTMTTPTSTNTTTNGTPQQST). A compositionally biased stretch (polar residues) spans 2129–2138 (NTLSGKSPTP). The span at 2154–2209 (PSLSSSSANPISITNNTTSLSQQSNTTNTMPSTVSLSSGSTSINSNSSNSKSLRSP) shows a compositional bias: low complexity. Basic and acidic residues predominate over residues 2210 to 2278 (KSSDNDGKES…NNNDKFDSNK (69 aa)).

This Dictyostelium discoideum (Social amoeba) protein is Myb-like protein U (mybU).